The following is a 77-amino-acid chain: Acyl carrier protein (77 aa).

Residues 1 to 76 (MSLEDDVKAI…DVIKYIQERQ (76 aa)) enclose the Carrier domain. Ser-36 carries the O-(pantetheine 4'-phosphoryl)serine modification.

It belongs to the acyl carrier protein (ACP) family. In terms of processing, 4'-phosphopantetheine is transferred from CoA to a specific serine of apo-ACP by AcpS. This modification is essential for activity because fatty acids are bound in thioester linkage to the sulfhydryl of the prosthetic group.

Its subcellular location is the cytoplasm. It functions in the pathway lipid metabolism; fatty acid biosynthesis. Its function is as follows. Carrier of the growing fatty acid chain in fatty acid biosynthesis. The polypeptide is Acyl carrier protein (Chlamydia muridarum (strain MoPn / Nigg)).